The following is a 436-amino-acid chain: Cyclin-A2-2 (436 aa).

It belongs to the cyclin family. Cyclin AB subfamily. Expressed in roots, stems, leaves, flowers and siliques.

This is Cyclin-A2-2 (CYCA2-2) from Arabidopsis thaliana (Mouse-ear cress).